A 511-amino-acid chain; its full sequence is Dihydrolipoyl dehydrogenase, mitochondrial (511 aa).

FAD contacts are provided by residues 75-84, lysine 93, glycine 157, and 187-189; these read EKRGTLGGTC and TGS. A disulfide bridge links cysteine 84 with cysteine 89. Residues 224–231, glutamate 247, leucine 281, and glycine 316 each bind NAD(+); that span reads GGGIIGLE. FAD is bound by residues aspartate 357 and 363-366; that span reads MLAH. Histidine 489 functions as the Proton acceptor in the catalytic mechanism.

Belongs to the class-I pyridine nucleotide-disulfide oxidoreductase family. As to quaternary structure, homodimer. FAD is required as a cofactor.

It is found in the mitochondrion matrix. The enzyme catalyses N(6)-[(R)-dihydrolipoyl]-L-lysyl-[protein] + NAD(+) = N(6)-[(R)-lipoyl]-L-lysyl-[protein] + NADH + H(+). Lipoamide dehydrogenase is a component of the alpha-ketoacid dehydrogenase complexes. Malfunction of this protein blocks the progression of cell cycle from G1 to S phase. This is Dihydrolipoyl dehydrogenase, mitochondrial (dld1) from Schizosaccharomyces pombe (strain 972 / ATCC 24843) (Fission yeast).